Here is a 512-residue protein sequence, read N- to C-terminus: Envelope glycoprotein (512 aa).

An N-terminal signal peptide occupies residues 1–15 (MFLQTALLLLSLGVA). 5 N-linked (GlcNAc...) asparagine; by host glycosylation sites follow: Asn-185, Asn-263, Asn-289, Asn-378, and Asn-416. A helical transmembrane segment spans residues 479-502 (GQLGGLLYGNIGVYLLIAFAFVLL).

It localises to the virion membrane. Its function is as follows. Attaches the virus to host cellular receptor and later induces fusion of virion with host membrane. This is Envelope glycoprotein from Thogoto virus (isolate SiAr 126) (Tho).